The primary structure comprises 3127 residues: Probable polyketide synthase 33 (3127 aa).

The Ketosynthase family 3 (KS3) domain maps to 24 to 457 (SGDVAVVGIG…GSNVCLILSE (434 aa)). Active-site for beta-ketoacyl synthase activity residues include C196, H335, and H380. The segment at 660 to 693 (GVSADIIIGHSLGEISSAYCSGMIDFQTLCYLTY) is acyl/malonyl transferase. The active-site For acyl/malonyl transferase activity is S670. Positions 958 to 1080 (GPSIHSLGNN…GNFSLFKHNI (123 aa)) are N-terminal hotdog fold. One can recognise a PKS/mFAS DH domain in the interval 958-1257 (GPSIHSLGNN…CTIVGSNPDS (300 aa)). H992 acts as the Proton acceptor; for dehydratase activity in catalysis. Positions 1096-1257 (NFTTISKQDF…CTIVGSNPDS (162 aa)) are C-terminal hotdog fold. D1168 functions as the Proton donor; for dehydratase activity in the catalytic mechanism. The interval 1369–1394 (SNNNNNNNNNNNNNNNNNNNNKNNGY) is disordered. The segment covering 1370–1394 (NNNNNNNNNNNNNNNNNNNNKNNGY) has biased composition (low complexity). A Carrier domain is found at 2539-2616 (SNNEIIRSTI…QSIEIIKSAH (78 aa)). The residue at position 2576 (S2576) is an O-(pantetheine 4'-phosphoryl)serine. A disordered region spans residues 2617–2659 (NKNNNNNNINNNNNNNNNNNNNNNNNNNNNNNNNNNNNNNNNN). Positions 2617–2671 (NKNNNNNNINNNNNNNNNNNNNNNNNNNNNNNNNNNNNNNNNNLVKKEQQSLDEF) form a coiled coil. Residues 2937-2957 (VLTLYNIPITIFIAILIIDIF) form a helical membrane-spanning segment.

The cofactor is pantetheine 4'-phosphate.

The protein localises to the membrane. Functionally, probable polyketide synthase. The protein is Probable polyketide synthase 33 (pks33) of Dictyostelium discoideum (Social amoeba).